The sequence spans 326 residues: Apolipoprotein F (326 aa).

Residues 1–35 (MTGLCGYSAPDMRGLRLIMIPVELLLCYLLLHPVD) form the signal peptide. Residues 36 to 164 (ATSYGKQTNV…EQQSTGRVGR (129 aa)) constitute a propeptide that is removed on maturation. A glycan (N-linked (GlcNAc...) asparagine) is linked at N118. The O-linked (GalNAc...) threonine glycan is linked to T274. Residue S323 is modified to Phosphoserine.

Belongs to the apolipoprotein F family. O-glycosylated with core 1 or possibly core 8 glycans. As to expression, expressed by the liver and secreted in plasma.

Its subcellular location is the secreted. In terms of biological role, minor apolipoprotein that associates with LDL. Inhibits cholesteryl ester transfer protein (CETP) activity and appears to be an important regulator of cholesterol transport. Also associates to a lesser degree with VLDL, Apo-AI and Apo-AII. The polypeptide is Apolipoprotein F (APOF) (Homo sapiens (Human)).